The following is a 110-amino-acid chain: uncharacterized protein (110 aa).

Residues 1-19 (MKYLVGCLCLAAICLSAGA) form the signal peptide. The N-linked (GlcNAc...) asparagine glycan is linked to Asn101.

Component of the acid-soluble and acid-insoluble organic matrix of prismatic shell layers (at protein level).

It localises to the secreted. This is an uncharacterized protein from Haliotis asinina (Donkey's ear abalone).